We begin with the raw amino-acid sequence, 236 residues long: Protein N-lysine methyltransferase METTL21A (236 aa).

Residues tryptophan 47, 73 to 75, aspartate 112, tryptophan 143, and alanine 161 contribute to the S-adenosyl-L-methionine site; that span reads GAG.

It belongs to the methyltransferase superfamily. METTL21 family. In terms of assembly, interacts with heat shock 70 family members; at least some of these proteins are methylation substrates.

It is found in the cytoplasm. It carries out the reaction L-lysyl-[protein] + 3 S-adenosyl-L-methionine = N(6),N(6),N(6)-trimethyl-L-lysyl-[protein] + 3 S-adenosyl-L-homocysteine + 3 H(+). Its function is as follows. Protein-lysine methyltransferase that selectively trimethylates residues in heat shock protein 70 (HSP70) family members. Contributes to the in vivo trimethylation of Lys residues in HSPA1 and HSPA8. In vitro methylates 'Lys-561' in HSPA1, 'Lys-564' in HSPA2, 'Lys-585' in HSPA5, 'Lys-563' in HSPA6 and 'Lys-561' in HSPA8. The chain is Protein N-lysine methyltransferase METTL21A (METTL21A) from Pongo abelii (Sumatran orangutan).